A 496-amino-acid polypeptide reads, in one-letter code: Lysine--tRNA ligase (496 aa).

Mg(2+) is bound by residues Glu408 and Glu415.

The protein belongs to the class-II aminoacyl-tRNA synthetase family. Homodimer. Requires Mg(2+) as cofactor.

The protein resides in the cytoplasm. It carries out the reaction tRNA(Lys) + L-lysine + ATP = L-lysyl-tRNA(Lys) + AMP + diphosphate. This is Lysine--tRNA ligase from Legionella pneumophila (strain Paris).